The sequence spans 196 residues: RNA-binding protein with multiple splicing (196 aa).

The residue at position 1 (methionine 1) is an N-acetylmethionine. Threonine 12 bears the Phosphothreonine mark. The 78-residue stretch at 24-101 folds into the RRM domain; that stretch reads RTLFVSGLPL…QTLRLEFAKA (78 aa). An interaction with RNA region spans residues 98-105; sequence FAKANTKM. The residue at position 113 (threonine 113) is a Phosphothreonine.

As to quaternary structure, homodimer; each protein chain binds one RNA molecule via the external surface of the homodimer. Interacts with RNA binding proteins MBNL1, RBFOX2, RBM4 and RBM14; the interaction allows cooperative assembly of stable cell-specific alternative splicing regulatory complexes. Interacts with SMAD2, SMAD3 and SMAD4; the interactions are direct. As to expression, ubiquitously expressed, at various levels depending on the isoform and the tissue. Strongly expressed in the heart, prostate, small intestine, large intestine, and ovary; moderately expressed in the placenta, lung, liver, kidney, pancreas, and testis; and poorly expressed in the skeletal muscle, spleen, thymus and peripheral leukocytes.

The protein localises to the nucleus. It is found in the cytoplasm. It localises to the stress granule. The protein resides in the P-body. RNA binding protein that mediates the regulation of pre-mRNA alternative splicing (AS). Acts either as activator (FLNB, HSPG2, LIPA1, MYOCD, PTPRF and PPFIBP1) or repressor (TPM1, ACTN1, ITGA7, PIEZO1, LSM14B, MBNL1 and MBML2) of splicing events on specific pre-mRNA targets. Together with RNA binding proteins RBFOX2 and MBNL1/2, activates a splicing program associated with differentiated contractile vascular smooth muscle cells (SMC) by regulating AS of numerous pre-mRNA involved in actin cytoskeleton and focal adhesion machineries, suggesting a role in promoting a cell differentiated state. Binds to introns, exons and 3'-UTR associated with tandem CAC trinucleotide motifs separated by a variable spacer region, at a minimum as a dimer. The minimal length of RNA required for RBPMS-binding tandem CAC motifs is 15 nt, with spacing ranging from 1 to 9 nt. Can also bind to CA dinucleotide repeats. Mediates repression of TPM1 exon 3 by binding to CAC tandem repeats in the flanking intronic regions, followed by higher-order oligomerization and heterotypic interactions with other splicing regulators including MBNL1 and RBFOX2, which prevents assembly of ATP-dependent splicing complexes. In terms of biological role, acts as a regulator of pre-mRNA alternative splicing (AS). Binds mRNA. Regulates AS of ACTN1, FLNB, although with lower efficiency than isoform A / RBPMSA. Acts as coactivator of SMAD transcriptional activity in a TGFB1-dependent manner, possibly through increased phosphorylation of SMAD2 and SMAD3 at the C-terminal SSXS regions and promotion of the nuclear accumulation of SMAD proteins. In Homo sapiens (Human), this protein is RNA-binding protein with multiple splicing.